The chain runs to 488 residues: Acetyl-coenzyme A carboxylase carboxyl transferase subunit beta, chloroplastic (488 aa).

Positions 189–211 are disordered; it reads ISGSDSGSSNIRTDGNGSDIRGR. In terms of domain architecture, CoA carboxyltransferase N-terminal spans 224-488; sequence LWVQCENCYG…LHGFFPLTQN (265 aa). Residues Cys228, Cys231, Cys247, and Cys250 each coordinate Zn(2+). Residues 228–250 form a C4-type zinc finger; that stretch reads CENCYGLNYKKFFKSKMNICEQC.

It belongs to the AccD/PCCB family. In terms of assembly, acetyl-CoA carboxylase is a heterohexamer composed of biotin carboxyl carrier protein, biotin carboxylase and 2 subunits each of ACCase subunit alpha and ACCase plastid-coded subunit beta (accD). Requires Zn(2+) as cofactor.

The protein localises to the plastid. It is found in the chloroplast stroma. It catalyses the reaction N(6)-carboxybiotinyl-L-lysyl-[protein] + acetyl-CoA = N(6)-biotinyl-L-lysyl-[protein] + malonyl-CoA. It functions in the pathway lipid metabolism; malonyl-CoA biosynthesis; malonyl-CoA from acetyl-CoA: step 1/1. In terms of biological role, component of the acetyl coenzyme A carboxylase (ACC) complex. Biotin carboxylase (BC) catalyzes the carboxylation of biotin on its carrier protein (BCCP) and then the CO(2) group is transferred by the transcarboxylase to acetyl-CoA to form malonyl-CoA. In Liriodendron tulipifera (Tuliptree), this protein is Acetyl-coenzyme A carboxylase carboxyl transferase subunit beta, chloroplastic.